We begin with the raw amino-acid sequence, 264 residues long: Glucosamine-6-phosphate deaminase (264 aa).

Asp-67 acts as the Proton acceptor; for enolization step in catalysis. Asn-136 (for ring-opening step) is an active-site residue. Residue His-138 is the Proton acceptor; for ring-opening step of the active site. Glu-143 serves as the catalytic For ring-opening step.

It belongs to the glucosamine/galactosamine-6-phosphate isomerase family. NagB subfamily. Homohexamer.

The enzyme catalyses alpha-D-glucosamine 6-phosphate + H2O = beta-D-fructose 6-phosphate + NH4(+). The protein operates within amino-sugar metabolism; N-acetylneuraminate degradation; D-fructose 6-phosphate from N-acetylneuraminate: step 5/5. Its function is as follows. Catalyzes the reversible isomerization-deamination of glucosamine 6-phosphate (GlcN6P) to form fructose 6-phosphate (Fru6P) and ammonium ion. In Shewanella woodyi (strain ATCC 51908 / MS32), this protein is Glucosamine-6-phosphate deaminase.